Consider the following 652-residue polypeptide: Leucine-rich repeat-containing protein 4 (652 aa).

Residues 1–40 (MKLLWQVTVHHTWNAVLLPVVYLTAQVWILCAAIAAAASA) form the signal peptide. The Extracellular segment spans residues 1 to 526 (MKLLWQVTVH…SLDEVMKTTK (526 aa)). An LRRNT domain is found at 41 to 74 (GPQNCPSVCSCSNQFSKVVCTRRGLSEVPQGIPS). 2 cysteine pairs are disulfide-bonded: cysteine 45-cysteine 51 and cysteine 49-cysteine 60. LRR repeat units follow at residues 75–96 (NTRY…TFRH), 99–120 (HLEV…AFNG), 123–144 (SLNT…AFEY), 147–168 (KLRE…AFNR), 171–193 (SLMR…AFEG), 196–217 (NLKY…TPLV), 218–239 (GLEE…SFHG), 242–263 (SLKK…AFDG), and 266–287 (SLVE…LFTP). The LRRCT domain occupies 299–351 (NPWNCDCDILWLAWWLREYIPTNSTCCGRCHAPMHMRGRYLVEVDQASFQCSA). Intrachain disulfides connect cysteine 303/cysteine 328 and cysteine 305/cysteine 349. N-linked (GlcNAc...) asparagine glycans are attached at residues asparagine 321 and asparagine 362. Positions 352 to 441 (PFIMDAPRDL…SNASAYLNVS (90 aa)) constitute an Ig-like C2-type domain. Cysteine 373 and cysteine 423 are oxidised to a cystine. The chain crosses the membrane as a helical span at residues 527–547 (IIIGCFVAVTLLAAAMLIVFY). Residues 548–652 (KLRKRHQQRS…TKDKVQETQI (105 aa)) are Cytoplasmic-facing.

As to quaternary structure, interacts (via LRR repeats) with NTNG2. Interacts with DLG4. Found in a complex with NMDA receptors. In terms of processing, N-glycosylated. In terms of tissue distribution, mainly expressed in the brain. Expression is concentrated in the olfactory bulb, cortex, hippocampus and cerebellum in adult brain. Detected both embryonically and postnatally with stronger expression in postnatal stages.

Its subcellular location is the membrane. It is found in the postsynaptic cell membrane. Its function is as follows. Synaptic adhesion protein. Regulates the formation of exitatory synapses through the recruitment of pre-and-postsynaptic proteins. Organize the lamina/pathway-specific differentiation of dendrites. Plays an important role for auditory synaptic responses. Involved in the suppression of glioma. In Rattus norvegicus (Rat), this protein is Leucine-rich repeat-containing protein 4 (Lrrc4).